The following is a 23-amino-acid chain: Potassium channel toxin alpha-KTx 13.4 (23 aa).

3 disulfides stabilise this stretch: C2–C15, C5–C20, and C9–C22. The interaction with Ca(2+)-activated K(+) channels stretch occupies residues 13–20 (GKCINGKC). Residue Y23 is modified to Tyrosine amide.

Expressed by the venom gland.

It localises to the secreted. Blocks the potassium channel Shaker B. In Tityus stigmurus (Brazilian scorpion), this protein is Potassium channel toxin alpha-KTx 13.4.